Here is a 291-residue protein sequence, read N- to C-terminus: Light-independent protochlorophyllide reductase iron-sulfur ATP-binding protein (291 aa).

ATP-binding positions include 10–15 (GIGKST) and K39. S14 contributes to the Mg(2+) binding site. Residues C95 and C129 each coordinate [4Fe-4S] cluster. 180 to 181 (NR) contributes to the ATP binding site.

This sequence belongs to the NifH/BchL/ChlL family. As to quaternary structure, homodimer. Protochlorophyllide reductase is composed of three subunits; ChlL, ChlN and ChlB. The cofactor is [4Fe-4S] cluster.

It is found in the plastid. Its subcellular location is the chloroplast. It catalyses the reaction chlorophyllide a + oxidized 2[4Fe-4S]-[ferredoxin] + 2 ADP + 2 phosphate = protochlorophyllide a + reduced 2[4Fe-4S]-[ferredoxin] + 2 ATP + 2 H2O. It participates in porphyrin-containing compound metabolism; chlorophyll biosynthesis (light-independent). Functionally, component of the dark-operative protochlorophyllide reductase (DPOR) that uses Mg-ATP and reduced ferredoxin to reduce ring D of protochlorophyllide (Pchlide) to form chlorophyllide a (Chlide). This reaction is light-independent. The L component serves as a unique electron donor to the NB-component of the complex, and binds Mg-ATP. The polypeptide is Light-independent protochlorophyllide reductase iron-sulfur ATP-binding protein (Larix decidua (European larch)).